The chain runs to 103 residues: Alpha-ketoglutarate dehydrogenase component 4 (103 aa).

Residue methionine 1 is modified to N-acetylmethionine. Residue lysine 5 is modified to N6-succinyllysine. The interval 20 to 69 (TPLIRFPDRRDNPKPNVSEALRSAGLPSHSSVISQHSKGSKSPDLLMYQG) is disordered. Over residues 47 to 56 (SHSSVISQHS) the composition is skewed to polar residues. 3 positions are modified to phosphoserine: serine 49, serine 61, and serine 90.

It belongs to the alpha-ketoglutarate dehydrogenase component 4 family. In terms of assembly, component of the 2-oxoglutarate dehydrogenase complex (OGDHC), composed of OGDH (2-oxoglutarate dehydrogenase; also called E1 subunit), DLST (dihydrolipoamide succinyltransferase; also called E2 subunit) and DLD (dihydrolipoamide dehydrogenase; also called E3 subunit), and the assembly factor KGD4. Within OGDHC complex, interacts (via N-terminus) with E3 subunit and (via C-terminus) with E2 subunit.

The protein resides in the mitochondrion. Molecular adapter that is necessary to form a stable 2-oxoglutarate dehydrogenase enzyme complex (OGDHC). Enables the specific recruitment of E3 subunit to E2 subunit in the 2-oxoglutarate dehydrogenase complex (OGDHC). This chain is Alpha-ketoglutarate dehydrogenase component 4, found in Homo sapiens (Human).